The chain runs to 410 residues: LL-diaminopimelate aminotransferase (410 aa).

Substrate is bound by residues Tyr-15 and Gly-42. Residues Tyr-72, 108 to 109 (TK), Tyr-132, Asn-186, Tyr-217, and 245 to 247 (SFS) each bind pyridoxal 5'-phosphate. Positions 109, 132, and 186 each coordinate substrate. At Lys-248 the chain carries N6-(pyridoxal phosphate)lysine. Residues Arg-256 and Asn-291 each coordinate pyridoxal 5'-phosphate. Substrate is bound by residues Asn-291 and Arg-387.

This sequence belongs to the class-I pyridoxal-phosphate-dependent aminotransferase family. LL-diaminopimelate aminotransferase subfamily. In terms of assembly, homodimer. It depends on pyridoxal 5'-phosphate as a cofactor.

The catalysed reaction is (2S,6S)-2,6-diaminopimelate + 2-oxoglutarate = (S)-2,3,4,5-tetrahydrodipicolinate + L-glutamate + H2O + H(+). It participates in amino-acid biosynthesis; L-lysine biosynthesis via DAP pathway; LL-2,6-diaminopimelate from (S)-tetrahydrodipicolinate (aminotransferase route): step 1/1. In terms of biological role, involved in the synthesis of meso-diaminopimelate (m-DAP or DL-DAP), required for both lysine and peptidoglycan biosynthesis. Catalyzes the direct conversion of tetrahydrodipicolinate to LL-diaminopimelate. The protein is LL-diaminopimelate aminotransferase of Lawsonia intracellularis (strain PHE/MN1-00).